Reading from the N-terminus, the 604-residue chain is NADPH oxidase activator (604 aa).

TPR repeat units lie at residues 36–69 (SKIN…DKYL) and 71–103 (SSYY…LRGH). Disordered stretches follow at residues 180 to 298 (FKPP…KLPS) and 383 to 581 (DIIP…PYQV). Low complexity-rich tracts occupy residues 194–215 (SATT…SPPS) and 225–243 (PSSS…SSSP). Pro residues predominate over residues 244–260 (KLPPTPKPSFGSSPPPS). Residues 261-284 (SSSSSSSSSSSSSSSISPLTNKTL) are compositionally biased toward low complexity. Positions 309-384 (KITLKVFYKD…EINEINVKDI (76 aa)) constitute a PB1 domain. Composition is skewed to low complexity over residues 396-424 (PDKT…SSSS), 435-453 (PKTT…TTST), and 467-483 (FGST…SSSS). The span at 502 to 528 (LLKQQNQTQSINIPPKVPTSSRPKMTQ) shows a compositional bias: polar residues. Low complexity predominate over residues 529 to 570 (SHSPPSSSPLSSYSTSFQSVSSPSLSSSYNGSTSSYGGFSSS). A WW domain is found at 573–604 (PPTPYPYQVLYTDSNEKYYLNTETNETFWELP).

Its function is as follows. May function as an activator of NOX1, a superoxide-producing NADPH oxidase. The polypeptide is NADPH oxidase activator (ncfA) (Dictyostelium discoideum (Social amoeba)).